The sequence spans 404 residues: MDFYQEYITTIHDFCIDKEQLVKRIEGLKVSRPASLIIPILYKEVENPPLKKIITDLNECTYLSQVVIALAAETTEQYVHVVEYFKDLKLPHIVVWCDGPRIKQIIFDMKKKGIDLTSFKGKGKDVWIATGIATLESYAIAYHDADIVTYSVDLPAKLLYPIVETELNFFFNKGYYARINLDSMTMHGRVFRLFVRPLLDTLQSESNADILRYFLAFRYTLAGEFAMTSDLAMNIRIPADWGLEVGLLAEVYRNATTKKICQIDLGYYDHKHQELGVNRSEGLCKMVSDIFTTFMRVVTESTDNRISESYLHGIHVRYKRLGQDLIRRYHADALCNGLYYNRHEEEIYVDMFARVIRKAGDDYRHDPSDVLMPDWTRALSAVPDLREKLYEACIADVKEYCEKK.

Position 146 (aspartate 146) interacts with a divalent metal cation. 188-190 contacts (2R)-3-phosphoglycerate; the sequence is GRV. Histidine 270 is an a divalent metal cation binding site.

This sequence belongs to the glycosyltransferase 2 family. The cofactor is Mn(2+). Requires Co(2+) as cofactor. Mg(2+) is required as a cofactor.

It carries out the reaction an NDP-alpha-D-glucose + (2R)-3-phosphoglycerate = (2R)-2-O-(alpha-D-glucopyranosyl)-3-phospho-glycerate + a ribonucleoside 5'-diphosphate + H(+). Involved in the biosynthesis of 6-O-methylglucose lipopolysaccarides (MGLPs). Catalyzes the transfer of a glucose (Glc) moiety from uridine diphosphate (UDP-Glc) to the position 2 of 3-phospho-D-glycerate (3-PGA) to form glucosyl-3-phosphoglycerate (GPG). In Methanococcoides burtonii (strain DSM 6242 / NBRC 107633 / OCM 468 / ACE-M), this protein is Glucosyl-3-phosphoglycerate synthase.